Consider the following 331-residue polypeptide: UPF0324 membrane protein SA0329 (331 aa).

Transmembrane regions (helical) follow at residues 9–26 (FMIGLSLTFIVALFSFLA), 31–48 (ILDKVGALTIAILIAILY), 69–88 (LLRFAIILYGLKLNIFDIIG), 93–115 (LLAIDVGVVIFSIVMMLFVNKLL), 122–144 (ALLLGVGTGVCGAAAIAAVAPIF), 154–176 (SIGIIALIGTIFSLIYTAIYAIF), 183–202 (YGAWSGVSLHEIAHVVLAGG), 217–234 (LGRVFLLIPLTIVLILIM), 247–269 (ISIPYFLIGFVIMALVNTYVTIP), 273–295 (LNILNTISTICLLMAMVALGLNV), and 308–330 (LMTIIITSICLSSLAFIVVHWLY).

The protein belongs to the UPF0324 family.

It is found in the cell membrane. In Staphylococcus aureus (strain N315), this protein is UPF0324 membrane protein SA0329.